The primary structure comprises 138 residues: MLSPKRTKFRKAHKGRIHGLAKSGTQLNFGAFGLKALEPERITARQIEASRRAITRAMKRAGRVWIRIFPDTPVSTKPAEVRMGSGKGNPEYWAARVKPGRILFEIEGVPPEVAKLALSLGAAKLPIKTKFVQRIGDA.

It belongs to the universal ribosomal protein uL16 family. In terms of assembly, part of the 50S ribosomal subunit.

Binds 23S rRNA and is also seen to make contacts with the A and possibly P site tRNAs. The chain is Large ribosomal subunit protein uL16 from Gluconobacter oxydans (strain 621H) (Gluconobacter suboxydans).